We begin with the raw amino-acid sequence, 698 residues long: Elongation factor G (698 aa).

Residues 11–291 (THFRNIGIAA…AVVDYLPSPL (281 aa)) form the tr-type G domain. Residues 20–27 (AHIDAGKT), 90–94 (DTPGH), and 144–147 (NKMD) each bind GTP.

It belongs to the TRAFAC class translation factor GTPase superfamily. Classic translation factor GTPase family. EF-G/EF-2 subfamily.

It localises to the cytoplasm. Catalyzes the GTP-dependent ribosomal translocation step during translation elongation. During this step, the ribosome changes from the pre-translocational (PRE) to the post-translocational (POST) state as the newly formed A-site-bound peptidyl-tRNA and P-site-bound deacylated tRNA move to the P and E sites, respectively. Catalyzes the coordinated movement of the two tRNA molecules, the mRNA and conformational changes in the ribosome. The sequence is that of Elongation factor G from Deinococcus radiodurans (strain ATCC 13939 / DSM 20539 / JCM 16871 / CCUG 27074 / LMG 4051 / NBRC 15346 / NCIMB 9279 / VKM B-1422 / R1).